Here is a 333-residue protein sequence, read N- to C-terminus: Fe(3+)-citrate import system permease protein YfmD (333 aa).

A run of 9 helical transmembrane segments spans residues Leu-13–Val-33, Thr-67–Met-87, Ile-97–Ala-117, Ser-121–Ala-141, Leu-151–Ile-171, Phe-201–Leu-221, Ile-238–Ile-258, Tyr-279–Ala-299, and Ile-302–Phe-322.

This sequence belongs to the binding-protein-dependent transport system permease family. FecCD subfamily. The complex is composed of one ATP-binding protein (YfmF), two transmembrane proteins (YfmD and YfmE) and a solute-binding protein (YfmC).

It is found in the cell membrane. Part of the ABC transporter complex YfmCDEF involved in citrate-dependent Fe(3+) import. Involved in the translocation of the substrate across the membrane. This Bacillus subtilis (strain 168) protein is Fe(3+)-citrate import system permease protein YfmD (yfmD).